A 441-amino-acid polypeptide reads, in one-letter code: Enolase (441 aa).

Gln164 contributes to the (2R)-2-phosphoglycerate binding site. Residue Glu206 is the Proton donor of the active site. The Mg(2+) site is built by Asp243, Glu289, and Asp316. The (2R)-2-phosphoglycerate site is built by Lys341, Arg370, Ser371, and Lys392. The active-site Proton acceptor is the Lys341.

It belongs to the enolase family. It depends on Mg(2+) as a cofactor.

It is found in the cytoplasm. The protein localises to the secreted. The protein resides in the cell surface. The enzyme catalyses (2R)-2-phosphoglycerate = phosphoenolpyruvate + H2O. Its pathway is carbohydrate degradation; glycolysis; pyruvate from D-glyceraldehyde 3-phosphate: step 4/5. Functionally, catalyzes the reversible conversion of 2-phosphoglycerate (2-PG) into phosphoenolpyruvate (PEP). It is essential for the degradation of carbohydrates via glycolysis. The chain is Enolase from Leuconostoc mesenteroides subsp. mesenteroides (strain ATCC 8293 / DSM 20343 / BCRC 11652 / CCM 1803 / JCM 6124 / NCDO 523 / NBRC 100496 / NCIMB 8023 / NCTC 12954 / NRRL B-1118 / 37Y).